Here is a 602-residue protein sequence, read N- to C-terminus: Potassium voltage-gated channel subfamily A member 5 (602 aa).

The tract at residues 1–202 (MEISLVPLEN…FYQLGDEAME (202 aa)) is tetramerization domain. Over 1–238 (MEISLVPLEN…LIFEYPESSG (238 aa)) the chain is Cytoplasmic. Residues 58–107 (EDANQGGRPLPPMAQELPQPRRLSAEDEEGEGDPGLGTVEEDQAPQDAGS) form a disordered region. Ser-81 is modified (phosphoserine; by CK2 and PKA). Residue Lys-212 forms a Glycyl lysine isopeptide (Lys-Gly) (interchain with G-Cter in SUMO) linkage. Residues 239-260 (SARAIAIVSVLVILISIITFCL) form a helical membrane-spanning segment. Over 261 to 314 (ETLPEFRDERELLRHPPVPPQPPAPAPGINGSVSGALSSGPTVAPLLPRTLADP) the chain is Extracellular. Residues 315–336 (FFIVETTCVIWFTFELLVRFFA) traverse the membrane as a helical segment. Cys-337 carries S-palmitoyl cysteine lipidation. Residues 337–347 (CPSKAEFSRNI) are Cytoplasmic-facing. A helical transmembrane segment spans residues 348–368 (MNIIDVVAIFPYFITLGTELA). The Extracellular segment spans residues 369–384 (EQQPGGGGQNGQQAMS). A helical; Voltage-sensor transmembrane segment spans residues 385 to 405 (LAILRVIRLVRVFRIFKLSRH). Topologically, residues 406 to 420 (SKGLQILGKTLQASM) are cytoplasmic. Positions 407-420 (KGLQILGKTLQASM) are S4-S5 linker. Residues 421–442 (RELGLLIFFLFIGVILFSSAVY) traverse the membrane as a helical segment. The Extracellular segment spans residues 443 to 456 (FAEADNHGSHFSSI). Positions 457–468 (PDAFWWAVVTMT) form an intramembrane region, helical. Positions 469–474 (TVGYGD) match the Selectivity filter motif. Residues 469–476 (TVGYGDMR) lie within the membrane without spanning it. At 477 to 483 (PITVGGK) the chain is on the extracellular side. The helical transmembrane segment at 484 to 512 (IVGSLCAIAGVLTIALPVPVIVSNFNYFY) threads the bilayer. Residues 513–602 (HRETDHEEQA…CLDTSRETDL (90 aa)) lie on the Cytoplasmic side of the membrane. The segment covering 523-536 (ALKEEQGNQRRESG) has biased composition (basic and acidic residues). Positions 523-543 (ALKEEQGNQRRESGLDTGGQR) are disordered. Lys-525 participates in a covalent cross-link: Glycyl lysine isopeptide (Lys-Gly) (interchain with G-Cter in SUMO). A phosphoserine; by PKA mark is found at Ser-535, Ser-546, and Ser-569. Residues 600-602 (TDL) carry the PDZ-binding motif.

This sequence belongs to the potassium channel family. A (Shaker) (TC 1.A.1.2) subfamily. Kv1.5/KCNA5 sub-subfamily. As to quaternary structure, homotetramer and heterotetramer of potassium channel proteins. Interacts with DLG1, which enhances channel currents. Forms a ternary complex with DLG1 and CAV3. Interacts with KCNAB1. Interacts with UBE2I. Interacts with XIRP2; the interaction is required for normal action potential configuration in the heart. Glycosylated. In terms of processing, sumoylated on Lys-212, and Lys-525, preferentially with SUMO3. Sumoylation regulates the voltage sensitivity of the channel. In terms of tissue distribution, expressed equally in atrium, ventricle, aorta and skeletal muscle. Weaker expression in brain.

The protein localises to the cell membrane. It catalyses the reaction K(+)(in) = K(+)(out). Its function is as follows. Voltage-gated potassium channel that mediates transmembrane potassium transport in excitable membranes. Forms tetrameric potassium-selective channels through which potassium ions pass in accordance with their electrochemical gradient. The channel alternates between opened and closed conformations in response to the voltage difference across the membrane. Can form functional homotetrameric channels and heterotetrameric channels that contain variable proportions of KCNA1, KCNA2, KCNA4, KCNA5, and possibly other family members as well; channel properties depend on the type of alpha subunits that are part of the channel. Channel properties are modulated by cytoplasmic beta subunits that regulate the subcellular location of the alpha subunits and promote rapid inactivation. Homotetrameric channels display rapid activation and slow inactivation. Required for normal electrical conduction including formation of the infranodal ventricular conduction system and normal action potential configuration, as a result of its interaction with XIRP2. May play a role in regulating the secretion of insulin in normal pancreatic islets. The chain is Potassium voltage-gated channel subfamily A member 5 (Kcna5) from Rattus norvegicus (Rat).